Consider the following 203-residue polypeptide: Cbp/p300-interacting transactivator 1 (203 aa).

Disordered regions lie at residues 1 to 24 (MPTM…DANQ) and 51 to 86 (TANG…PSFN). Over residues 61–84 (PTSSSGSTSPIGSPTATPSSKPPS) the composition is skewed to low complexity. Residues 168–177 (LMSLVVELGL) carry the Nuclear export signal motif.

The protein belongs to the CITED family. Homodimer. Binds to RBM14. Interacts (via N-terminus) with HSPA8; the interaction suppresses the association of CITED1 with p300/CBP and SMAD-mediated transcription transactivation. Interacts (via C-terminus) with TOX3 (via HGM box); the interaction increases estrogen-response element (ERE)-dependent transcription and protection against cell death. Interacts with ESR1; the interaction occurs in a estrogen-dependent manner. Interacts (unphosphorylated form preferentially and via C-terminus) with EP300. Interacts (via C-terminus) with CREBBP. Interacts with EGR2. Phosphorylated. Phosphorylation changes in a cell cycle-dependent manner and reduces its transcriptional cofactor activity. As to expression, expressed in calvarial osteoblasts. Expressed in nulliparous mammary epithelial cells; absent in pregnant mice and in lacting mammary glands. Also expressed in mammary tumors (at protein level). Expressed only in melanocytes and testis. Expressed at high levels in the strongly pigmented melanoma cells but at low levels in the weakly pigmented cells.

It is found in the nucleus. Its subcellular location is the cytoplasm. In terms of biological role, transcriptional coactivator of the p300/CBP-mediated transcription complex. Enhances SMAD-mediated transcription by strengthening the functional link between the DNA-binding SMAD transcription factors and the p300/CBP transcription coactivator complex. Stimulates estrogen-dependent transactivation activity mediated by estrogen receptors signaling; stabilizes the interaction of estrogen receptor ESR1 and histone acetyltransferase EP300. Positively regulates TGF-beta signaling through its association with the SMAD/p300/CBP-mediated transcriptional coactivator complex. Induces transcription from estrogen-responsive promoters and protection against cell death. Potentiates EGR2-mediated transcriptional activation activity from the ERBB2 promoter. Acts as an inhibitor of osteoblastic mineralization through a cAMP-dependent parathyroid hormone receptor signaling. May play a role in pigmentation of melanocytes. Associates with chromatin to the estrogen-responsive TGF-alpha promoter region in a estrogen-dependent manner. The sequence is that of Cbp/p300-interacting transactivator 1 (Cited1) from Mus musculus (Mouse).